Reading from the N-terminus, the 794-residue chain is Striatin-3 (794 aa).

An N-acetylmethionine modification is found at Met-1. The segment covering 1-12 (MDELAGGGGGQG) has biased composition (gly residues). Residues 1 to 59 (MDELAGGGGGQGMAVPPRPQQGPGGNLSLPPGANGAPGGGGPPAAETAGPPAGPELSRP) form a disordered region. The caveolin-binding stretch occupies residues 70-78 (YIQHEWARF). Residues 76 to 135 (ARFEMERAHWEVERAELQARIAFLQGERKGQENLKKDLVRRIKMLEYALKQERAKYHKLK) adopt a coiled-coil conformation. Thr-149 is modified (phosphothreonine). Residues 164–181 (QNSQLTWKQGRQLLRQYL) form a calmodulin-binding region. Phosphoserine occurs at positions 200, 212, 227, 255, and 332. Residues 309 to 339 (EDGEGAGEARSSGDGTEWDKDDLSPTAEVWD) are disordered. 6 WD repeats span residues 475–514 (SHFD…PAKK), 528–567 (AHIG…VDPY), 581–620 (AHTD…PCIC), 676–715 (QSSN…MIHS), 718–757 (AHLD…CVQE), and 764–794 (KLDE…KVFV).

This sequence belongs to the WD repeat striatin family. As to quaternary structure, tetramerizes. Part of the core of STRIPAK complexes composed of PP2A catalytic and scaffolding subunits, the striatins (PP2A regulatory subunits), the striatin-associated proteins MOB4, STRIP1 and STRIP2, PDCD10 and members of the STE20 kinases, such as STK24 and STK26. The STRIPAK complex can be extended by adapter proteins such as SLMAP:SIKE1 or CTTNBP2NL. Interacts with CDC42BPB.

The protein localises to the cytoplasm. It is found in the membrane. Its function is as follows. Calmodulin-binding scaffolding protein which is the center of the striatin-interacting phosphatase and kinase (STRIPAK) complexes. STRIPAK complexes have critical roles in protein (de)phosphorylation and are regulators of multiple signaling pathways including Hippo, MAPK, nuclear receptor and cytoskeleton remodeling. Different types of STRIPAK complexes are involved in a variety of biological processes such as cell growth, differentiation, apoptosis, metabolism and immune regulation. The chain is Striatin-3 (Strn3) from Rattus norvegicus (Rat).